Consider the following 276-residue polypeptide: NH(3)-dependent NAD(+) synthetase (276 aa).

An ATP-binding site is contributed by 43 to 50 (GISGGVDS). Residue Asp-49 participates in Mg(2+) binding. Arg-146 is a binding site for deamido-NAD(+). Thr-166 provides a ligand contact to ATP. Position 171 (Glu-171) interacts with Mg(2+). 2 residues coordinate deamido-NAD(+): Lys-179 and Asp-186. The ATP site is built by Lys-195 and Thr-217. A deamido-NAD(+)-binding site is contributed by 266 to 267 (HK).

Belongs to the NAD synthetase family. Homodimer.

It carries out the reaction deamido-NAD(+) + NH4(+) + ATP = AMP + diphosphate + NAD(+) + H(+). It functions in the pathway cofactor biosynthesis; NAD(+) biosynthesis; NAD(+) from deamido-NAD(+) (ammonia route): step 1/1. Its function is as follows. Catalyzes the ATP-dependent amidation of deamido-NAD to form NAD. Uses ammonia as a nitrogen source. This chain is NH(3)-dependent NAD(+) synthetase, found in Shewanella baltica (strain OS223).